The primary structure comprises 99 residues: Ferredoxin, vegetative (99 aa).

In terms of domain architecture, 2Fe-2S ferredoxin-type spans 4 to 96 (YQVRLINKKR…DCTIRTHQEP (93 aa)). Positions 42, 47, 50, and 80 each coordinate [2Fe-2S] cluster.

Belongs to the 2Fe2S plant-type ferredoxin family. The cofactor is [2Fe-2S] cluster.

Ferredoxins are iron-sulfur proteins that transfer electrons in a wide variety of metabolic reactions. Donates electrons to the nitrogenase 2. In Trichormus variabilis (strain ATCC 29413 / PCC 7937) (Anabaena variabilis), this protein is Ferredoxin, vegetative (fdxH2).